Consider the following 65-residue polypeptide: Photosystem II reaction center protein H (65 aa).

A helical transmembrane segment spans residues 27-47 (GAVPVMAFIGVLLLVFLVIML).

This sequence belongs to the PsbH family. As to quaternary structure, PSII is composed of 1 copy each of membrane proteins PsbA, PsbB, PsbC, PsbD, PsbE, PsbF, PsbH, PsbI, PsbJ, PsbK, PsbL, PsbM, PsbT, PsbX, PsbY, Psb30/Ycf12, peripheral proteins PsbO, CyanoQ (PsbQ), PsbU, PsbV and a large number of cofactors. It forms dimeric complexes.

The protein localises to the cellular thylakoid membrane. Functionally, one of the components of the core complex of photosystem II (PSII), required for its stability and/or assembly. PSII is a light-driven water:plastoquinone oxidoreductase that uses light energy to abstract electrons from H(2)O, generating O(2) and a proton gradient subsequently used for ATP formation. It consists of a core antenna complex that captures photons, and an electron transfer chain that converts photonic excitation into a charge separation. The protein is Photosystem II reaction center protein H of Prochlorococcus marinus (strain NATL1A).